We begin with the raw amino-acid sequence, 634 residues long: Formate--tetrahydrofolate ligase (634 aa).

78–85 (TPLGEGKS) is a binding site for ATP.

It belongs to the formate--tetrahydrofolate ligase family. Homodimer.

It carries out the reaction (6S)-5,6,7,8-tetrahydrofolate + formate + ATP = (6R)-10-formyltetrahydrofolate + ADP + phosphate. It participates in one-carbon metabolism; tetrahydrofolate interconversion. This is Formate--tetrahydrofolate ligase (THFS) from Arabidopsis thaliana (Mouse-ear cress).